Reading from the N-terminus, the 184-residue chain is Photosystem I assembly protein Ycf4 (184 aa).

Helical transmembrane passes span 21-43 (NFCW…ISSY) and 63-85 (GLVM…CAIS).

The protein belongs to the Ycf4 family.

The protein localises to the plastid. The protein resides in the chloroplast thylakoid membrane. In terms of biological role, seems to be required for the assembly of the photosystem I complex. The sequence is that of Photosystem I assembly protein Ycf4 from Spinacia oleracea (Spinach).